The primary structure comprises 186 residues: MNVASIMDDLKRRMDGAIVAFKHELGGLRTGRASASLLEPLTVESYGSVVHINQVANISVPEPRMLFVSVWDKTMVGAVERAIRDSGLGLNPITDGTNLRIPLPELNEERRKELVKIAHHYAEQARVATRHVRRDGMDNLKKLEKDGEIGQDEAHSLSEKVQKLTDETIADIDKILAVKESEIMHV.

This sequence belongs to the RRF family.

The protein localises to the cytoplasm. Functionally, responsible for the release of ribosomes from messenger RNA at the termination of protein biosynthesis. May increase the efficiency of translation by recycling ribosomes from one round of translation to another. In Bartonella tribocorum (strain CIP 105476 / IBS 506), this protein is Ribosome-recycling factor.